The following is a 138-amino-acid chain: Small ribosomal subunit protein uS8 (138 aa).

This sequence belongs to the universal ribosomal protein uS8 family. In terms of assembly, part of the 30S ribosomal subunit. Contacts proteins S5 and S12.

In terms of biological role, one of the primary rRNA binding proteins, it binds directly to 16S rRNA central domain where it helps coordinate assembly of the platform of the 30S subunit. This Thermus thermophilus (strain ATCC BAA-163 / DSM 7039 / HB27) protein is Small ribosomal subunit protein uS8 (rpsH).